The chain runs to 507 residues: MGFSVFTPTRSLDGVSGFFQGAFLLSLFLVLFKAVQFYLRRQWLLKALEKFPSTPSHWLWGHDLKDREFQQVLTWVEKFPGACLQWLSGSKTRVLLYDPDYVKVVLGRSDPKASGIYQFLAPWIGYGLLLLNGKKWFQHRRMLTPAFHYGILKPYVKIMADSVNIMLDKWEKLDDQDHPLEIFHYVSLMTLDTVMKCAFSHQGSVQLDVNSRSYTKAVEDLNNLTFFRVRSAFYGNSIIYNMSSDGRLSRRACQIAHEHTDGVIKMRKAQLQNEEELQKARKKRHLDFLDILLFAKMEDGKSLSDEDLRAEVDTFMFEGHDTTASGISWVFYALATHPEHQERCREEVQSILGDGTSVTWDHLDQIPYTTMCIKEALRLYPPVPSVSRELSSPVTFPDGRSIPKGITTTILIYGLHHNPSYWPNPKVFDPSRFSPDSPRHSHAYLPFSGGARNCIGKQFAMNELKVAVALTLLRFELLPDPTRIPVPMARLVLKSKNGIHLRLKKLR.

Positions 1–4 (MGFS) are cleaved as a propeptide — removed in mature form. Glu318 is a binding site for heme. Ser437 carries the post-translational modification Phosphoserine. Residue Cys454 participates in heme binding.

The protein belongs to the cytochrome P450 family. The cofactor is heme.

The protein resides in the endoplasmic reticulum membrane. Its subcellular location is the microsome membrane. The enzyme catalyses an omega-methyl-long-chain fatty acid + reduced [NADPH--hemoprotein reductase] + O2 = an omega-hydroxy-long-chain fatty acid + oxidized [NADPH--hemoprotein reductase] + H2O + H(+). It carries out the reaction dodecanoate + reduced [NADPH--hemoprotein reductase] + O2 = (11R)-hydroxydodecanoate + oxidized [NADPH--hemoprotein reductase] + H2O + H(+). It catalyses the reaction dodecanoate + reduced [NADPH--hemoprotein reductase] + O2 = 12-hydroxydodecanoate + oxidized [NADPH--hemoprotein reductase] + H2O + H(+). The catalysed reaction is tetradecanoate + reduced [NADPH--hemoprotein reductase] + O2 = 14-hydroxytetradecanoate + oxidized [NADPH--hemoprotein reductase] + H2O + H(+). It participates in lipid metabolism; fatty acid metabolism. Its function is as follows. A cytochrome P450 monooxygenase that catalyzes omega and omega-1 hydroxylation of saturated fatty acids. Exhibits preferential omega versus omega-1 regioselectivity and (R) versus (S) stereoselectivity for hydroxylation of dodecanoic (lauric) acid. Mechanistically, uses molecular oxygen inserting one oxygen atom into a substrate, and reducing the second into a water molecule, with two electrons provided by NADPH via cytochrome P450 reductase (CPR; NADPH-ferrihemoprotein reductase). The protein is Cytochrome P450 4A14 of Rattus norvegicus (Rat).